Reading from the N-terminus, the 367-residue chain is tRNA/tmRNA (uracil-C(5))-methyltransferase (367 aa).

Q190, Y218, N223, E239, and D299 together coordinate S-adenosyl-L-methionine. The active-site Nucleophile is C324. The active-site Proton acceptor is E358.

It belongs to the class I-like SAM-binding methyltransferase superfamily. RNA M5U methyltransferase family. TrmA subfamily.

The enzyme catalyses uridine(54) in tRNA + S-adenosyl-L-methionine = 5-methyluridine(54) in tRNA + S-adenosyl-L-homocysteine + H(+). It carries out the reaction uridine(341) in tmRNA + S-adenosyl-L-methionine = 5-methyluridine(341) in tmRNA + S-adenosyl-L-homocysteine + H(+). In terms of biological role, dual-specificity methyltransferase that catalyzes the formation of 5-methyluridine at position 54 (m5U54) in all tRNAs, and that of position 341 (m5U341) in tmRNA (transfer-mRNA). This Yersinia pestis bv. Antiqua (strain Antiqua) protein is tRNA/tmRNA (uracil-C(5))-methyltransferase.